The primary structure comprises 325 residues: E3 ubiquitin-protein ligase SIAH2 (325 aa).

Positions 1 to 15 (MSRPSSTGPSANKPC) are enriched in polar residues. A disordered region spans residues 1–43 (MSRPSSTGPSANKPCSKQPPPPQTPHAPSPAAPPAAATISAAG). Ser6 is modified (phosphoserine). Ser16 carries the phosphoserine; by DYRK2 modification. A compositionally biased stretch (pro residues) spans 17–33 (KQPPPPQTPHAPSPAAP). Thr24 is modified (phosphothreonine; by MAPK14). Phosphoserine; by DYRK2 and MAPK14 is present on Ser29. A compositionally biased stretch (low complexity) spans 34–43 (PAAATISAAG). A Phosphoserine; by DYRK2 modification is found at Ser69. The RING-type zinc finger occupies 81-116 (CPVCFDYVLPPILQCQAGHLVCNQCRQKLSCCPTCR). Thr120 carries the phosphothreonine; by DYRK2 modification. The tract at residues 131–323 (VASAVLFPCK…LGINVTISTC (193 aa)) is SBD. Residues 134-194 (AVLFPCKYAT…VMSHLMHAHK (61 aa)) form an SIAH-type zinc finger. Zn(2+)-binding residues include Cys139, Cys146, His158, Cys162, Cys169, Cys176, His188, and His193.

The protein belongs to the SINA (Seven in absentia) family. Homodimer. Interacts with VAV1, without mediating its ubiquitin-mediated degradation. Probable component of some large E3 complex possibly composed of UBE2D1, SIAH2, CACYBP/SIP, SKP1, APC and TBL1X. Interacts with UBE2I. Interacts with UBE2E2. Interacts with PEG10, which may inhibit its activity. Interacts with PEG3 and EGLN2. Interacts with DYRK2. Interacts with SNCAIP. Interacts with NR1D1 and NR1D2. Interacts with DCC. Interacts with AXIN1. Phosphorylated at Thr-24 and Ser-29 by MAPK14, which mediates the degradation by the proteasome of EGLN3. Phosphorylated at Ser-29 by DYRK2; this increases the ubiquitin ligase activity and promotes degradation of EGLN3. Detected in brain (at protein level).

It localises to the cytoplasm. The protein resides in the nucleus. It catalyses the reaction S-ubiquitinyl-[E2 ubiquitin-conjugating enzyme]-L-cysteine + [acceptor protein]-L-lysine = [E2 ubiquitin-conjugating enzyme]-L-cysteine + N(6)-ubiquitinyl-[acceptor protein]-L-lysine.. The protein operates within protein modification; protein ubiquitination. E3 ubiquitin-protein ligase that mediates ubiquitination and subsequent proteasomal degradation of target proteins. E3 ubiquitin ligases accept ubiquitin from an E2 ubiquitin-conjugating enzyme in the form of a thioester and then directly transfers the ubiquitin to targeted substrates. Mediates E3 ubiquitin ligase activity either through direct binding to substrates or by functioning as the essential RING domain subunit of larger E3 complexes. Mediates ubiquitination and proteasomal degradation of DYRK2 in response to hypoxia. Promotes monoubiquitination of SNCA. Triggers the ubiquitin-mediated degradation of many substrates, including proteins involved in transcription regulation (GPS2, POU2AF1, PML, NCOR1), a cell surface receptor (DCC), an antiapoptotic protein (BAG1), and a protein involved in synaptic vesicle function in neurons (SYP). It is thereby involved in apoptosis, tumor suppression, cell cycle, transcription and signaling processes. Has some overlapping function with SIAH1. Triggers the ubiquitin-mediated degradation of TRAF2, whereas SIAH1 does not. Regulates cellular clock function via ubiquitination of circadian transcriptional repressors NR1D1 and NR1D2 leading to their proteasomal degradation. Plays an important role in mediating the rhythmic degradation/clearance of NR1D1 and NR1D2 contributing to their circadian profile of protein abundance. Mediates ubiquitination and degradation of EGLN2 and EGLN3 in response to the unfolded protein response (UPR), leading to their degradation and subsequent stabilization of ATF4. Also part of the Wnt signaling pathway in which it mediates the Wnt-induced ubiquitin-mediated proteasomal degradation of AXIN1. This chain is E3 ubiquitin-protein ligase SIAH2 (Siah2), found in Rattus norvegicus (Rat).